The following is a 149-amino-acid chain: Protein FAM72A (149 aa).

This sequence belongs to the FAM72 family. As to quaternary structure, interacts with UNG. As to expression, may be up-regulated in malignant colon cancers, compared to normal colon and colon adenomas. Expression is also elevated in other common cancer types, including breast, lung, uterus, and ovary.

The protein localises to the cytoplasm. The protein resides in the mitochondrion. May play a role in the regulation of cellular reactive oxygen species metabolism. May participate in cell growth regulation. The polypeptide is Protein FAM72A (FAM72A) (Homo sapiens (Human)).